The following is a 579-amino-acid chain: Folliculin (579 aa).

A disordered region spans residues 30-81 (PQGDGNEDSPGQGEQAEEEEGGIQMNSRMRAHSPAEGASVESSSPGPKKSDM). 2 positions are modified to phosphoserine: Ser62 and Ser73. The region spanning 86–242 (RSLAAGHPGY…RNGNAARSLT (157 aa)) is the uDENN FLCN/SMCR8-type domain. An essential for interaction with LDHA region spans residues 210–220 (AEQFGCPQRAQ). Positions 287-310 (EKLADLEEESESWDNSEAEEEEKA) form a coiled coil. Positions 294–308 (EESESWDNSEAEEEE) are enriched in acidic residues. Residues 294–337 (EESESWDNSEAEEEEKAPVLPESTEGRELTQGPAESSSLSGCGS) form a disordered region. The residue at position 302 (Ser302) is a Phosphoserine. Positions 326–336 (PAESSSLSGCG) are enriched in polar residues. In terms of domain architecture, cDENN FLCN/SMCR8-type spans 339-491 (QPRKLPVFKS…ILNKIEAALT (153 aa)). A phosphoserine; by ULK1 mark is found at Ser406, Ser537, and Ser542. The 66-residue stretch at 493 to 558 (QNLSVDVVDQ…LLKFWMTGLS (66 aa)) folds into the dDENN FLCN/SMCR8-type domain. Ser571 is subject to Phosphoserine.

It belongs to the folliculin family. As to quaternary structure, interacts (via C-terminus) with FNIP1 or FNIP2 (via C-terminus). Component of the lysosomal folliculin complex (LFC), composed of FLCN, FNIP1 (or FNIP2), RagA/RRAGA or RagB/RRAGB GDP-bound, RagC/RRAGC or RagD/RRAGD GTP-bound, and Ragulator. Interaction with FNIP1 or FNIP2 mediates indirect interaction with the PRKAA1, PRKAB1 and PRKAG1 subunits of 5'-AMP-activated protein kinase (AMPK). Interacts with HSP90AA1 in the presence of FNIP1. Interacts with HSP70, STUB1, CDC37, AHSA1, CCT2, STIP1, PTGES3 and PPP5C. Interacts with GABARAP; interaction takes place in the presence of FNIP1 and/or FNIP2. Interacts with RILP; the interaction is direct and promotes association between RILP and RAB34. Interacts with KIF3A and KIF3B. Interacts with lactate dehydrogenase LDHA, but not LDHB; the interaction is direct, may preferentially bind LDHA dimers rather than tetramers, and regulates LDHA activity, acting as an uncompetitive inhibitor. Phosphorylation by ULK1 modulates the interaction with GABARAP and is required to regulate autophagy. Expressed in most tissues tested, including skin, lung, kidney, heart, testis and stomach.

Its subcellular location is the lysosome membrane. It is found in the cytoplasm. The protein localises to the cytosol. It localises to the cell projection. The protein resides in the cilium. Its subcellular location is the cytoskeleton. It is found in the microtubule organizing center. The protein localises to the centrosome. It localises to the spindle. The protein resides in the nucleus. With respect to regulation, GTPase-activating activity is inhibited in the folliculin complex (LFC), which stabilizes the GDP-bound state of RagA/RRAGA (or RagB/RRAGB), because Arg-164 is located far from the RagC/RRAGC or RagD/RRAGD nucleotide pocket. Disassembly of the LFC complex upon amino acid restimulation liberates the GTPase-activating activity. In terms of biological role, multi-functional protein, involved in both the cellular response to amino acid availability and in the regulation of glycolysis. GTPase-activating protein that plays a key role in the cellular response to amino acid availability through regulation of the non-canonical mTORC1 signaling cascade controlling the MiT/TFE factors TFEB and TFE3. Activates mTORC1 by acting as a GTPase-activating protein: specifically stimulates GTP hydrolysis by RagC/RRAGC or RagD/RRAGD, promoting the conversion to the GDP-bound state of RagC/RRAGC or RagD/RRAGD, and thereby activating the kinase activity of mTORC1. The GTPase-activating activity is inhibited during starvation and activated in presence of nutrients. Acts as a key component for non-canonical mTORC1-dependent control of the MiT/TFE factors TFEB and TFE3, while it is not involved in mTORC1-dependent phosphorylation of canonical RPS6KB1/S6K1 and EIF4EBP1/4E-BP1. In low-amino acid conditions, the lysosomal folliculin complex (LFC) is formed on the membrane of lysosomes, which inhibits the GTPase-activating activity of FLCN, inactivates mTORC1 and maximizes nuclear translocation of TFEB and TFE3. Upon amino acid restimulation, RagA/RRAGA (or RagB/RRAGB) nucleotide exchange promotes disassembly of the LFC complex and liberates the GTPase-activating activity of FLCN, leading to activation of mTORC1 and subsequent cytoplasmic retention of TFEB and TFE3. Indirectly acts as a positive regulator of Wnt signaling by promoting mTOR-dependent cytoplasmic retention of MiT/TFE factor TFE3. Required for the exit of hematopoietic stem cell from pluripotency by promoting mTOR-dependent cytoplasmic retention of TFE3, thereby increasing Wnt signaling. Acts as an inhibitor of browning of adipose tissue by regulating mTOR-dependent cytoplasmic retention of TFE3. Involved in the control of embryonic stem cells differentiation; together with LAMTOR1 it is necessary to recruit and activate RagC/RRAGC and RagD/RRAGD at the lysosomes, and to induce exit of embryonic stem cells from pluripotency via non-canonical, mTOR-independent TFE3 inactivation. In response to flow stress, regulates STK11/LKB1 accumulation and mTORC1 activation through primary cilia: may act by recruiting STK11/LKB1 to primary cilia for activation of AMPK resided at basal bodies, causing mTORC1 down-regulation. Together with FNIP1 and/or FNIP2, regulates autophagy: following phosphorylation by ULK1, interacts with GABARAP and promotes autophagy. Required for starvation-induced perinuclear clustering of lysosomes by promoting association of RILP with its effector RAB34. Regulates glycolysis by binding to lactate dehydrogenase LDHA, acting as an uncompetitive inhibitor. This Homo sapiens (Human) protein is Folliculin.